The sequence spans 1101 residues: Selenocysteine insertion sequence-binding protein 2-like (1101 aa).

5 disordered regions span residues 154–206 (LGQV…AGPD), 240–295 (LWKS…PDSG), 320–387 (QKKP…SESL), 884–1010 (TSDG…ISVE), and 1030–1101 (TLQL…TQTT). The segment covering 255 to 265 (AESSSEQGASE) has biased composition (low complexity). Ser276 is subject to Phosphoserine. The span at 327 to 346 (KNQTFSRGGRQTEQRNNSQV) shows a compositional bias: polar residues. Basic and acidic residues-rich tracts occupy residues 356–371 (SSERRQNLQKRPDNKH) and 892–908 (ENEKEVSCKHSTSEKPS). Low complexity predominate over residues 925 to 939 (ATGSTTSATSAGKST). Residues 940 to 950 (ASDKEEVKPDD) show a composition bias toward basic and acidic residues. Polar residues predominate over residues 954 to 964 (ASQQSTETGSL). Positions 988 to 1002 (LEEEEDEDEEEEEDY) are enriched in acidic residues. The segment covering 1030 to 1039 (TLQLGKTLNG) has biased composition (polar residues). Over residues 1040-1057 (SEEDNVEQSGEEEAEAPE) the composition is skewed to acidic residues. Residues 1070-1087 (ADQQASPGQQKSSNCSSL) show a composition bias toward polar residues.

Binds SECIS (Sec insertion sequence) elements present on selenocysteine (Sec) protein mRNAs, but does not promote Sec incorporation into selenoproteins in vitro. The chain is Selenocysteine insertion sequence-binding protein 2-like (SECISBP2L) from Homo sapiens (Human).